The primary structure comprises 278 residues: Small ribosomal subunit biogenesis GTPase RsgA (278 aa).

The CP-type G domain occupies 62-218 (KNTLVRPKVV…ICDTPGFNVI (157 aa)). Residues 112-115 (TKND) and 162-170 (GQSGVGKSS) contribute to the GTP site. Residues cysteine 241, cysteine 246, histidine 248, and cysteine 254 each contribute to the Zn(2+) site.

Belongs to the TRAFAC class YlqF/YawG GTPase family. RsgA subfamily. Monomer. Associates with 30S ribosomal subunit, binds 16S rRNA. It depends on Zn(2+) as a cofactor.

It localises to the cytoplasm. Functionally, one of several proteins that assist in the late maturation steps of the functional core of the 30S ribosomal subunit. Helps release RbfA from mature subunits. May play a role in the assembly of ribosomal proteins into the subunit. Circularly permuted GTPase that catalyzes slow GTP hydrolysis, GTPase activity is stimulated by the 30S ribosomal subunit. This Mycoplasma pneumoniae (strain ATCC 29342 / M129 / Subtype 1) (Mycoplasmoides pneumoniae) protein is Small ribosomal subunit biogenesis GTPase RsgA.